Here is a 508-residue protein sequence, read N- to C-terminus: Probable cytosol aminopeptidase (508 aa).

Positions 274 and 279 each coordinate Mn(2+). Lysine 286 is a catalytic residue. The Mn(2+) site is built by aspartate 297, aspartate 356, and glutamate 358. Arginine 360 is a catalytic residue.

The protein belongs to the peptidase M17 family. It depends on Mn(2+) as a cofactor.

It is found in the cytoplasm. It catalyses the reaction Release of an N-terminal amino acid, Xaa-|-Yaa-, in which Xaa is preferably Leu, but may be other amino acids including Pro although not Arg or Lys, and Yaa may be Pro. Amino acid amides and methyl esters are also readily hydrolyzed, but rates on arylamides are exceedingly low.. The catalysed reaction is Release of an N-terminal amino acid, preferentially leucine, but not glutamic or aspartic acids.. Presumably involved in the processing and regular turnover of intracellular proteins. Catalyzes the removal of unsubstituted N-terminal amino acids from various peptides. This is Probable cytosol aminopeptidase from Cutibacterium acnes (strain DSM 16379 / KPA171202) (Propionibacterium acnes).